The following is an 80-amino-acid chain: Phage shock protein G (80 aa).

The next 2 helical transmembrane spans lie at 5–25 (LFVI…LGII) and 41–61 (LALM…VWVI).

It localises to the cell inner membrane. In terms of biological role, effector of the phage shock response. The chain is Phage shock protein G (pspG) from Escherichia coli (strain K12).